A 784-amino-acid chain; its full sequence is Lon protease (784 aa).

The Lon N-terminal domain occupies 6 to 207 (LPLMALRDMV…TVITTLTSNI (202 aa)). 356-363 (GPPGVGKT) is an ATP binding site. A Lon proteolytic domain is found at 592–773 (EDQIGSTTGL…DQVLKHALVE (182 aa)). Active-site residues include serine 679 and lysine 722.

This sequence belongs to the peptidase S16 family. As to quaternary structure, homohexamer. Organized in a ring with a central cavity.

It localises to the cytoplasm. The catalysed reaction is Hydrolysis of proteins in presence of ATP.. Its function is as follows. ATP-dependent serine protease that mediates the selective degradation of mutant and abnormal proteins as well as certain short-lived regulatory proteins. Required for cellular homeostasis and for survival from DNA damage and developmental changes induced by stress. Degrades polypeptides processively to yield small peptide fragments that are 5 to 10 amino acids long. Binds to DNA in a double-stranded, site-specific manner. This Rickettsia typhi (strain ATCC VR-144 / Wilmington) protein is Lon protease.